The following is a 546-amino-acid chain: MAAKDVKFGNDARVKMLEGVNILADAVKVTLGPKGRNVVLDKSFGAPTITKDGVSVAREIELEDKFQNMGAQMVKQVASQANDVAGDGTTTATVLAQAIVNEGLKAVAAGMNPMDLKRGIDKAVAAAVEELKALSKDCSTSTEIEQVGTISANSDSSVGKIIAEAMEKVGRDGVITVEEGQALHDELDVVEGMQFDRGYLSPYFINNQESGSVELESPFILLVDKKISNIRELLPALEAVAKASRPLLIIAEDVEGEALATLVVNNMRGIVKVAAVKAPGFGDRRKAMLQDIAILTGGTVISEEVGLELEKATLEDLGQAKRVSITKENTTIIDGVGEEAMIQGRVAQIRQQIEDATSDYDKEKLQERVAKLAGGVAVIKVGAATEVEMKEKKDRVEDALHATRAAVEEGIVAGGGVALIRAASKIVDLQGDNEEQNVGIRVALRAMEAPLRQITKNAGDEESVVANNVRAGEGSYGYNAATGVYGDMLEMGILDPTKVTRSALQFAASVAGLMITTEAMVTDLPQKDSGMPDMGGMGGMGGMGMM.

ATP is bound by residues 30–33, lysine 51, 87–91, glycine 415, 479–481, and aspartate 495; these read TLGP, DGTTT, and NAA.

This sequence belongs to the chaperonin (HSP60) family. As to quaternary structure, forms a cylinder of 14 subunits composed of two heptameric rings stacked back-to-back. Interacts with the co-chaperonin GroES.

The protein localises to the cytoplasm. It catalyses the reaction ATP + H2O + a folded polypeptide = ADP + phosphate + an unfolded polypeptide.. Its function is as follows. Together with its co-chaperonin GroES, plays an essential role in assisting protein folding. The GroEL-GroES system forms a nano-cage that allows encapsulation of the non-native substrate proteins and provides a physical environment optimized to promote and accelerate protein folding. This chain is Chaperonin GroEL 1, found in Vibrio vulnificus (strain CMCP6).